Consider the following 265-residue polypeptide: tRNA (guanine-N(1)-)-methyltransferase (265 aa).

S-adenosyl-L-methionine is bound by residues G110 and 129-134 (LGDFVM). Residues 243-265 (LAAWGAPPPPLPKRRRGAKPNPN) are disordered. Over residues 254–265 (PKRRRGAKPNPN) the composition is skewed to basic residues.

It belongs to the RNA methyltransferase TrmD family. As to quaternary structure, homodimer.

Its subcellular location is the cytoplasm. It catalyses the reaction guanosine(37) in tRNA + S-adenosyl-L-methionine = N(1)-methylguanosine(37) in tRNA + S-adenosyl-L-homocysteine + H(+). Specifically methylates guanosine-37 in various tRNAs. This chain is tRNA (guanine-N(1)-)-methyltransferase, found in Deinococcus geothermalis (strain DSM 11300 / CIP 105573 / AG-3a).